Reading from the N-terminus, the 152-residue chain is Xanthine-guanine phosphoribosyltransferase (152 aa).

Residues 37–38, R69, and 88–96 contribute to the 5-phospho-alpha-D-ribose 1-diphosphate site; these read RG and DDLVDTGGT. GMP is bound at residue R69. D89 serves as a coordination point for Mg(2+). Residues D92 and I135 each contribute to the guanine site. Xanthine is bound by residues D92 and I135. GMP-binding positions include 92–96 and 134–135; these read DTGGT and WI.

Belongs to the purine/pyrimidine phosphoribosyltransferase family. XGPT subfamily. In terms of assembly, homotetramer. Mg(2+) is required as a cofactor.

It localises to the cell inner membrane. It carries out the reaction GMP + diphosphate = guanine + 5-phospho-alpha-D-ribose 1-diphosphate. The enzyme catalyses XMP + diphosphate = xanthine + 5-phospho-alpha-D-ribose 1-diphosphate. It catalyses the reaction IMP + diphosphate = hypoxanthine + 5-phospho-alpha-D-ribose 1-diphosphate. It participates in purine metabolism; GMP biosynthesis via salvage pathway; GMP from guanine: step 1/1. Its pathway is purine metabolism; XMP biosynthesis via salvage pathway; XMP from xanthine: step 1/1. Functionally, purine salvage pathway enzyme that catalyzes the transfer of the ribosyl-5-phosphate group from 5-phospho-alpha-D-ribose 1-diphosphate (PRPP) to the N9 position of the 6-oxopurines guanine and xanthine to form the corresponding ribonucleotides GMP (guanosine 5'-monophosphate) and XMP (xanthosine 5'-monophosphate), with the release of PPi. To a lesser extent, also acts on hypoxanthine. In Escherichia coli (strain UTI89 / UPEC), this protein is Xanthine-guanine phosphoribosyltransferase.